The sequence spans 97 residues: Small ribosomal subunit protein bS6 (97 aa).

The protein belongs to the bacterial ribosomal protein bS6 family.

Binds together with bS18 to 16S ribosomal RNA. In Bifidobacterium longum (strain NCC 2705), this protein is Small ribosomal subunit protein bS6.